Consider the following 161-residue polypeptide: Cyclic pyranopterin monophosphate synthase (161 aa).

Substrate-binding positions include 73-75 (LCH) and 110-111 (ME). D125 is a catalytic residue.

It belongs to the MoaC family. As to quaternary structure, homohexamer; trimer of dimers.

The catalysed reaction is (8S)-3',8-cyclo-7,8-dihydroguanosine 5'-triphosphate = cyclic pyranopterin phosphate + diphosphate. The protein operates within cofactor biosynthesis; molybdopterin biosynthesis. Catalyzes the conversion of (8S)-3',8-cyclo-7,8-dihydroguanosine 5'-triphosphate to cyclic pyranopterin monophosphate (cPMP). This is Cyclic pyranopterin monophosphate synthase from Pseudomonas savastanoi pv. phaseolicola (strain 1448A / Race 6) (Pseudomonas syringae pv. phaseolicola (strain 1448A / Race 6)).